The primary structure comprises 185 residues: Probable chorismate pyruvate-lyase (185 aa).

3 residues coordinate substrate: arginine 80, leucine 118, and glutamate 170.

It belongs to the UbiC family.

It is found in the cytoplasm. It carries out the reaction chorismate = 4-hydroxybenzoate + pyruvate. The protein operates within cofactor biosynthesis; ubiquinone biosynthesis. Functionally, removes the pyruvyl group from chorismate, with concomitant aromatization of the ring, to provide 4-hydroxybenzoate (4HB) for the ubiquinone pathway. The sequence is that of Probable chorismate pyruvate-lyase from Pseudomonas putida (strain ATCC 47054 / DSM 6125 / CFBP 8728 / NCIMB 11950 / KT2440).